The chain runs to 442 residues: GTPase Der (442 aa).

EngA-type G domains are found at residues 2–168 (ATVL…EEAG) and 182–356 (LKVA…EKID). Residues 8–15 (GRPNVGKS), 55–59 (DTCGL), 118–121 (NKVE), 188–195 (GKPNAGKS), 235–239 (DTAGM), and 301–304 (NKSD) each bind GTP. Residues 357–442 (LRIPTGLLNN…PIFIKLRRKK (86 aa)) enclose the KH-like domain.

It belongs to the TRAFAC class TrmE-Era-EngA-EngB-Septin-like GTPase superfamily. EngA (Der) GTPase family. In terms of assembly, associates with the 50S ribosomal subunit.

In terms of biological role, GTPase that plays an essential role in the late steps of ribosome biogenesis. In Kosmotoga olearia (strain ATCC BAA-1733 / DSM 21960 / TBF 19.5.1), this protein is GTPase Der.